We begin with the raw amino-acid sequence, 364 residues long: Chorismate synthase (364 aa).

Positions 48 and 54 each coordinate NADP(+). FMN-binding positions include 125-127 (RSS), 238-239 (NA), Gly-278, 293-297 (KPTSS), and Arg-319.

Belongs to the chorismate synthase family. Homotetramer. FMNH2 serves as cofactor.

The enzyme catalyses 5-O-(1-carboxyvinyl)-3-phosphoshikimate = chorismate + phosphate. It participates in metabolic intermediate biosynthesis; chorismate biosynthesis; chorismate from D-erythrose 4-phosphate and phosphoenolpyruvate: step 7/7. In terms of biological role, catalyzes the anti-1,4-elimination of the C-3 phosphate and the C-6 proR hydrogen from 5-enolpyruvylshikimate-3-phosphate (EPSP) to yield chorismate, which is the branch point compound that serves as the starting substrate for the three terminal pathways of aromatic amino acid biosynthesis. This reaction introduces a second double bond into the aromatic ring system. This is Chorismate synthase from Shewanella woodyi (strain ATCC 51908 / MS32).